Consider the following 138-residue polypeptide: Transcription antitermination protein NusB (138 aa).

The protein belongs to the NusB family.

In terms of biological role, involved in transcription antitermination. Required for transcription of ribosomal RNA (rRNA) genes. Binds specifically to the boxA antiterminator sequence of the ribosomal RNA (rrn) operons. This Alkaliphilus oremlandii (strain OhILAs) (Clostridium oremlandii (strain OhILAs)) protein is Transcription antitermination protein NusB.